The primary structure comprises 198 residues: Recombination protein RecR (198 aa).

The segment at C57–C72 adopts a C4-type zinc-finger fold. Positions S80–P175 constitute a Toprim domain.

The protein belongs to the RecR family.

May play a role in DNA repair. It seems to be involved in an RecBC-independent recombinational process of DNA repair. It may act with RecF and RecO. In Halalkalibacterium halodurans (strain ATCC BAA-125 / DSM 18197 / FERM 7344 / JCM 9153 / C-125) (Bacillus halodurans), this protein is Recombination protein RecR.